A 986-amino-acid chain; its full sequence is P3N-PIPO polyprotein (986 aa).

One can recognise a Peptidase S30 domain in the interval 141–284 (KLTEGQMNHL…QGVMDSMVQF (144 aa)). Residues H192, D201, and S235 each act as for P1 proteinase activity in the active site. An Involved in interaction with stylet and aphid transmission motif is present at residues 334-337 (KITC). Positions 592–594 (PTK) match the Involved in virions binding and aphid transmission motif. A Peptidase C6 domain is found at 618–740 (LYIARQGFCY…ESDIKHYRVG (123 aa)). Residues C626 and H699 each act as for helper component proteinase activity in the active site.

The protein belongs to the potyviridae P3N-PIPO polyprotein family. In terms of assembly, interacts (via PIPO domain) with host PCaP1 protein; this interaction may help to anchor the movement complex to the plasma membrane from which the complex could move to the plasmodesmata. Potyviral RNA is expressed as two polyproteins which undergo post-translational proteolytic processing. Genome polyprotein is processed by NIa-pro, P1 and HC-pro proteinases resulting in the production of at least ten individual proteins. P3N-PIPO is cleaved by P1 and HC-pro proteinases resulting in the production of three individual proteins. The P1 proteinase and the HC-pro cleave only their respective C-termini autocatalytically.

Its subcellular location is the host cell junction. The protein resides in the host plasmodesma. It carries out the reaction Hydrolyzes a Gly-|-Gly bond at its own C-terminus, commonly in the sequence -Tyr-Xaa-Val-Gly-|-Gly, in the processing of the potyviral polyprotein.. In terms of biological role, required for aphid transmission and also has proteolytic activity. Only cleaves a Gly-Gly dipeptide at its own C-terminus. Interacts with virions and aphid stylets. Acts as a suppressor of RNA-mediated gene silencing, also known as post-transcriptional gene silencing (PTGS), a mechanism of plant viral defense that limits the accumulation of viral RNAs. May have RNA-binding activity. Its function is as follows. Allows efficient cell to cell propagation, by bypassing the host cell wall barrier. Transports viral genome to neighboring plant cells directly through plasmosdesmata, without any budding. The sequence is that of P3N-PIPO polyprotein from Capsicum (peppers).